The chain runs to 115 residues: Hydrogenase maturation factor HypA (115 aa).

Position 2 (His2) interacts with Ni(2+). Zn(2+) contacts are provided by Cys73, Cys76, Cys89, and Cys92.

The protein belongs to the HypA/HybF family.

Involved in the maturation of [NiFe] hydrogenases. Required for nickel insertion into the metal center of the hydrogenase. This is Hydrogenase maturation factor HypA from Shewanella halifaxensis (strain HAW-EB4).